A 230-amino-acid chain; its full sequence is UPF0173 metal-dependent hydrolase RSKD131_0588 (230 aa).

Belongs to the UPF0173 family.

The protein is UPF0173 metal-dependent hydrolase RSKD131_0588 of Cereibacter sphaeroides (strain KD131 / KCTC 12085) (Rhodobacter sphaeroides).